The chain runs to 289 residues: Shikimate dehydrogenase (NADP(+)) (289 aa).

Shikimate is bound by residues 22-24 (SRS) and threonine 69. Residue lysine 73 is the Proton acceptor of the active site. Residue glutamate 85 coordinates NADP(+). Shikimate-binding residues include asparagine 94 and aspartate 109. Residues 134-138 (GAGGA), 158-163 (NRTLSR), and isoleucine 226 each bind NADP(+). Tyrosine 228 is a binding site for shikimate. Glycine 249 serves as a coordination point for NADP(+).

The protein belongs to the shikimate dehydrogenase family. As to quaternary structure, homodimer.

The catalysed reaction is shikimate + NADP(+) = 3-dehydroshikimate + NADPH + H(+). Its pathway is metabolic intermediate biosynthesis; chorismate biosynthesis; chorismate from D-erythrose 4-phosphate and phosphoenolpyruvate: step 4/7. Its function is as follows. Involved in the biosynthesis of the chorismate, which leads to the biosynthesis of aromatic amino acids. Catalyzes the reversible NADPH linked reduction of 3-dehydroshikimate (DHSA) to yield shikimate (SA). This chain is Shikimate dehydrogenase (NADP(+)), found in Brucella canis (strain ATCC 23365 / NCTC 10854 / RM-666).